Consider the following 167-residue polypeptide: Small ribosomal subunit protein uS5 (167 aa).

Residues 12–75 (LEDNVVAINR…EAARKNLIEV (64 aa)) form the S5 DRBM domain.

The protein belongs to the universal ribosomal protein uS5 family. In terms of assembly, part of the 30S ribosomal subunit. Contacts proteins S4 and S8.

Functionally, with S4 and S12 plays an important role in translational accuracy. Its function is as follows. Located at the back of the 30S subunit body where it stabilizes the conformation of the head with respect to the body. The protein is Small ribosomal subunit protein uS5 of Levilactobacillus brevis (strain ATCC 367 / BCRC 12310 / CIP 105137 / JCM 1170 / LMG 11437 / NCIMB 947 / NCTC 947) (Lactobacillus brevis).